The chain runs to 1161 residues: PAN2-PAN3 deadenylation complex catalytic subunit pan2 (1161 aa).

WD repeat units follow at residues 20-59 (GLPT…RYTS), 102-145 (AHEE…DKLQ), and 276-315 (ANVS…HFNE). The tract at residues 316 to 452 (MSKEVEFADV…GAKLNGEAED (137 aa)) is linker. One can recognise a USP domain in the interval 453–822 (DPLLKYSNVE…IPCVLAYQAR (370 aa)). The Exonuclease domain maps to 871-1049 (VALDTEFVDL…VEDARMALRL (179 aa)). Residues Asp-874, Glu-876, Asp-983, and Asp-1042 each contribute to the a divalent metal cation site. The tract at residues 1094–1161 (GTAVTMQNNS…GDFFGGSPLK (68 aa)) is disordered. Residues 1097–1110 (VTMQNNSGRNTPST) show a composition bias toward polar residues. Low complexity predominate over residues 1116 to 1129 (AAAAAATTSAPATP). Positions 1145–1155 (TFGGPGTGDFF) are enriched in gly residues.

Belongs to the peptidase C19 family. PAN2 subfamily. Forms a heterotrimer with an asymmetric homodimer of the regulatory subunit pan3 to form the poly(A)-nuclease (PAN) deadenylation complex. It depends on a divalent metal cation as a cofactor.

The protein localises to the cytoplasm. It carries out the reaction Exonucleolytic cleavage of poly(A) to 5'-AMP.. Its activity is regulated as follows. Positively regulated by the regulatory subunit pan3. Its function is as follows. Catalytic subunit of the poly(A)-nuclease (PAN) deadenylation complex, one of two cytoplasmic mRNA deadenylases involved in mRNA turnover. PAN specifically shortens poly(A) tails of RNA and the activity is stimulated by poly(A)-binding protein pab1. PAN deadenylation is followed by rapid degradation of the shortened mRNA tails by the CCR4-NOT complex. Deadenylated mRNAs are then degraded by two alternative mechanisms, namely exosome-mediated 3'-5' exonucleolytic degradation, or deadenylation-dependent mRNA decaping and subsequent 5'-3' exonucleolytic degradation by xrn1. May also be involved in post-transcriptional maturation of mRNA poly(A) tails. This is PAN2-PAN3 deadenylation complex catalytic subunit pan2 from Aspergillus clavatus (strain ATCC 1007 / CBS 513.65 / DSM 816 / NCTC 3887 / NRRL 1 / QM 1276 / 107).